A 171-amino-acid polypeptide reads, in one-letter code: 3-hydroxydecanoyl-[acyl-carrier-protein] dehydratase (171 aa).

Residue histidine 70 is part of the active site.

It belongs to the thioester dehydratase family. FabA subfamily. In terms of assembly, homodimer.

The protein localises to the cytoplasm. It carries out the reaction a (3R)-hydroxyacyl-[ACP] = a (2E)-enoyl-[ACP] + H2O. The enzyme catalyses (3R)-hydroxydecanoyl-[ACP] = (2E)-decenoyl-[ACP] + H2O. It catalyses the reaction (2E)-decenoyl-[ACP] = (3Z)-decenoyl-[ACP]. It functions in the pathway lipid metabolism; fatty acid biosynthesis. Functionally, necessary for the introduction of cis unsaturation into fatty acids. Catalyzes the dehydration of (3R)-3-hydroxydecanoyl-ACP to E-(2)-decenoyl-ACP and then its isomerization to Z-(3)-decenoyl-ACP. Can catalyze the dehydratase reaction for beta-hydroxyacyl-ACPs with saturated chain lengths up to 16:0, being most active on intermediate chain length. In Pseudomonas putida (strain W619), this protein is 3-hydroxydecanoyl-[acyl-carrier-protein] dehydratase.